A 122-amino-acid polypeptide reads, in one-letter code: Copper metallothionein 1 (122 aa).

Residues methionine 1–cysteine 35 are cys-rich copper-binding 1. The spacer B1 stretch occupies residues proline 36–threonine 50. The cys-rich copper-binding 2 stretch occupies residues cysteine 51–cysteine 72. The tract at residues proline 73–threonine 81 is spacer B2. Residues cysteine 82 to cysteine 103 form a cys-rich copper-binding 3 region. Residues proline 104–serine 113 form a spacer B3 region. The interval cysteine 114–alanine 122 is cys-rich copper-binding 4.

This sequence belongs to the metallothionein superfamily.

Its subcellular location is the cytoplasm. It is found in the cell cortex. Copper metallothionein that protects the cell against copper toxicity by tightly chelating copper ions. Required for antioxidant-mediated growth rescue in the presence of fluconazole. Acts as a critical factors for lung colonization and virulence. This chain is Copper metallothionein 1, found in Cryptococcus neoformans var. grubii serotype A (strain H99 / ATCC 208821 / CBS 10515 / FGSC 9487) (Filobasidiella neoformans var. grubii).